Reading from the N-terminus, the 179-residue chain is Alpha-tubulin N-acetyltransferase (179 aa).

Residues 1–175 (MRVEVVRAPG…NRFVVFDAYF (175 aa)) enclose the N-acetyltransferase domain. Acetyl-CoA contacts are provided by residues 109 to 122 (FYVD…GVGL) and 145 to 154 (SPKLFAFLKK).

Belongs to the acetyltransferase ATAT1 family.

It catalyses the reaction L-lysyl-[alpha-tubulin] + acetyl-CoA = N(6)-acetyl-L-lysyl-[alpha-tubulin] + CoA + H(+). Specifically acetylates 'Lys-40' in alpha-tubulin on the lumenal side of microtubules. Promotes microtubule destabilization and accelerates microtubule dynamics; this activity may be independent of acetylation activity. Acetylates alpha-tubulin with a slow enzymatic rate, due to a catalytic site that is not optimized for acetyl transfer. Enters the microtubule through each end and diffuses quickly throughout the lumen of microtubules. Acetylates only long/old microtubules because of its slow acetylation rate since it does not have time to act on dynamically unstable microtubules before the enzyme is released. This Phytophthora infestans (strain T30-4) (Potato late blight agent) protein is Alpha-tubulin N-acetyltransferase.